The chain runs to 471 residues: L-amino acid dehydrogenase (471 aa).

Gly-31 contributes to the Mg(2+) binding site. Ser-33 is a binding site for FAD. Gly-34 contributes to the Mg(2+) binding site. 3 residues coordinate FAD: Glu-52, Arg-60, and Val-256. Mg(2+) is bound at residue Ala-283. Residue Phe-453 coordinates FAD.

This sequence belongs to the flavin monoamine oxidase family. The cofactor is FAD. Mg(2+) is required as a cofactor.

Its subcellular location is the cellular thylakoid membrane. It carries out the reaction a plastoquinone + an L-alpha-amino acid + H2O = a plastoquinol + a 2-oxocarboxylate + NH4(+). It catalyses the reaction a plastoquinone + L-arginine + H2O = a plastoquinol + 5-guanidino-2-oxopentanoate + NH4(+). The protein operates within amino-acid degradation; L-arginine degradation. Its activity is regulated as follows. Inhibited by Ca(2+) and other cations such as Ni(2+), Co(2+) and Zn(2+). The inhibition by o-phenanthroline and salicylhydroxamic acid suggests the presence of a metal cofactor besides FAD in the enzyme. The L-arginine-stimulated O(2) consumption involving slr0782 is inhibited by inhibitors of the respiratory electron transport chain, such as KCN and 2,5-dibromo-3-methyl-6-isopropyl-p-benzoquinone, which indicates a participation of the cytochrome b6/f complex and of a cytochrome oxidase. L-amino acid dehydrogenase with broad substrate specificity. Catalyzes the oxidative deamination of various L-amino acids, L-Arg and L-Cys being the best substrates in vitro. Likely functions mainly as an L-arginine dehydrogenase in vivo. Probably feeds electrons from L-arginine oxidation and also from the oxidation of other L-amino acids into the respiratory electron transport chain associated to the thylakoid membrane, and does not directly interact with molecular oxygen but donates electrons to the plastoquinone pool. Cannot use D-amino acids as substrates. This Synechocystis sp. (strain ATCC 27184 / PCC 6803 / Kazusa) protein is L-amino acid dehydrogenase.